Consider the following 457-residue polypeptide: Glutamate--tRNA ligase 2 (457 aa).

The 'HIGH' region signature appears at 9 to 19 (PSPTGRIHIGN). The short motif at 250–254 (GLSKR) is the 'KMSKS' region element. Residue lysine 253 participates in ATP binding.

This sequence belongs to the class-I aminoacyl-tRNA synthetase family. Glutamate--tRNA ligase type 1 subfamily. As to quaternary structure, monomer.

It localises to the cytoplasm. It carries out the reaction tRNA(Glu) + L-glutamate + ATP = L-glutamyl-tRNA(Glu) + AMP + diphosphate. Catalyzes the attachment of glutamate to tRNA(Glu) in a two-step reaction: glutamate is first activated by ATP to form Glu-AMP and then transferred to the acceptor end of tRNA(Glu). The protein is Glutamate--tRNA ligase 2 of Mesorhizobium japonicum (strain LMG 29417 / CECT 9101 / MAFF 303099) (Mesorhizobium loti (strain MAFF 303099)).